The sequence spans 152 residues: Large ribosomal subunit protein bL9 (152 aa).

This sequence belongs to the bacterial ribosomal protein bL9 family.

In terms of biological role, binds to the 23S rRNA. This Synechococcus sp. (strain CC9311) protein is Large ribosomal subunit protein bL9.